The chain runs to 272 residues: Putative hydro-lyase RPB_3621 (272 aa).

This sequence belongs to the D-glutamate cyclase family.

The chain is Putative hydro-lyase RPB_3621 from Rhodopseudomonas palustris (strain HaA2).